We begin with the raw amino-acid sequence, 618 residues long: Sodium/iodide cotransporter (618 aa).

The Extracellular segment spans residues 1-14 (MEGAEAGARATFGP). Residues 15–31 (WDYGVFATMLLVSTGIG) traverse the membrane as a helical segment. Over 32–56 (LWVGLARGGQRSADDFFTGGRQLAA) the chain is Cytoplasmic. Residues 57-80 (VPVGLSLAASFMSAVQVLGVPAEA) traverse the membrane as a discontinuously helical segment. Na(+) contacts are provided by S69, V71, and Q72. V76 contacts iodide. The Extracellular portion of the chain corresponds to 81–84 (ARYG). Residues 85–105 (LKFLWMCVGQLLNSLLTALLF) traverse the membrane as a helical segment. M90 contacts iodide. The Cytoplasmic portion of the chain corresponds to 106-130 (LPIFYRLGLTSTYQYLELRFSRAVR). Residues 131-157 (LCGTLQYLVATMLYTGIVIYAPALILN) form a helical membrane-spanning segment. Y144 contributes to the Na(+) binding site. The Extracellular segment spans residues 158 to 163 (QVTGLD). Residues 164-181 (IWASLLSTGIICTLYTTV) traverse the membrane as a helical segment. Residues 182 to 189 (GGMKAVVW) are Cytoplasmic-facing. Residues 190 to 208 (TDVFQVVVMLVGFWVILAR) form a helical membrane-spanning segment. Topologically, residues 209 to 243 (GVMLMGGPWNVLSLAQNHSRINLMDFDPDPRSRYT) are extracellular. The discontinuously helical transmembrane segment at 244–266 (FWTFVVGGSLVWLSMYGVNQAQV) threads the bilayer. W255 contributes to the iodide binding site. M258 provides a ligand contact to Na(+). At 267–278 (QRYVACHTERKA) the chain is on the cytoplasmic side. A helical transmembrane segment spans residues 279 to 301 (KLALLVNQLGLFLIVASAACCGI). At 302 to 335 (VMFVYYKDCDPLLTGRIAAPDQYMPLLVLDIFED) the chain is on the extracellular side. A helical membrane pass occupies residues 336-363 (LPGVPGLFLACAYSGTLSTASTSINAMA). Residues 364–386 (AVTVEDLIKPRMPSLAPRKLVFI) are Cytoplasmic-facing. A helical transmembrane segment spans residues 387–408 (SKGLSFIYGSTCLTVAALSSLL). Topologically, residues 409–411 (GGG) are extracellular. Residues 412-437 (VLQGSFTVMGVISGPLLGAFTLGMLL) form a helical membrane-spanning segment. An iodide-binding site is contributed by L413. Na(+) is bound by residues S416 and F417. Position 417 (F417) interacts with iodide. Over 438–441 (PACN) the chain is Cytoplasmic. Residues 442-465 (TPGVLSGLTAGLAVSLWVAVGATL) traverse the membrane as a helical segment. At 466-520 (YPPGEQTMGVLPTSAAGCTNASVLPSPPGAANTSRGIPSSGMDSGRPAFADTFYA) the chain is on the extracellular side. 2 N-linked (GlcNAc...) asparagine glycosylation sites follow: N485 and N497. Residues 521-545 (VSYLYYGALGTLTTMLCGALISYLT) form a helical membrane-spanning segment. The Cytoplasmic segment spans residues 546-618 (GPTKRSSLGP…YLGHDVETNL (73 aa)). A Phosphoserine; by PKA modification is found at S551. Basic and acidic residues predominate over residues 571–587 (PKEDTTTLEDSLVKGPE). Residues 571-618 (PKEDTTTLEDSLVKGPEDIPAATKKPPGFRPEAETHPLYLGHDVETNL) form a disordered region.

It belongs to the sodium:solute symporter (SSF) (TC 2.A.21) family. In terms of assembly, monomer. Post-translationally, glycosylated.

It is found in the cell membrane. Its subcellular location is the cytoplasm. It catalyses the reaction iodide(out) + 2 Na(+)(out) = iodide(in) + 2 Na(+)(in). The enzyme catalyses chlorate(out) + 2 Na(+)(out) = chlorate(in) + 2 Na(+)(in). It carries out the reaction thiocyanate(out) + 2 Na(+)(out) = thiocyanate(in) + 2 Na(+)(in). The catalysed reaction is nitrate(out) + 2 Na(+)(out) = nitrate(in) + 2 Na(+)(in). It catalyses the reaction selenocyanate(out) + 2 Na(+)(out) = selenocyanate(in) + 2 Na(+)(in). Perchlorate inhibits iodide transport activity. Oxyanions inhibit iodide transport activity by blocking the binding sites for iodide and one of the sodium ions. Its function is as follows. Sodium:iodide symporter that mediates the transport of iodide into the thyroid gland. Can also mediate the transport of chlorate, thiocynate, nitrate and selenocynate. This is Sodium/iodide cotransporter (Slc5a5) from Mus musculus (Mouse).